The primary structure comprises 225 residues: MADS-box transcription factor 5 (225 aa).

The MADS-box domain maps to 1–61; that stretch reads MGRGKVELKR…GRLFEFSTSS (61 aa). One can recognise a K-box domain in the interval 89 to 179; sequence ELSNYQEYLK…KRKIQETSGE (91 aa).

May interact with the K-box of MADS6.

It localises to the nucleus. Its function is as follows. Probable transcription factor. This Oryza sativa subsp. indica (Rice) protein is MADS-box transcription factor 5 (MADS5).